The chain runs to 92 residues: Large ribosomal subunit protein bL25 (92 aa).

It belongs to the bacterial ribosomal protein bL25 family. In terms of assembly, part of the 50S ribosomal subunit; part of the 5S rRNA/L5/L18/L25 subcomplex. Contacts the 5S rRNA. Binds to the 5S rRNA independently of L5 and L18.

In terms of biological role, this is one of the proteins that binds to the 5S RNA in the ribosome where it forms part of the central protuberance. The protein is Large ribosomal subunit protein bL25 of Aliivibrio fischeri (strain MJ11) (Vibrio fischeri).